Here is a 259-residue protein sequence, read N- to C-terminus: Glutamate racemase (259 aa).

Substrate-binding positions include 7-8 and 39-40; these read DS and YG. C70 (proton donor/acceptor) is an active-site residue. 71 to 72 is a substrate binding site; the sequence is NS. C180 functions as the Proton donor/acceptor in the catalytic mechanism. 181–182 is a substrate binding site; sequence TH.

This sequence belongs to the aspartate/glutamate racemases family.

The catalysed reaction is L-glutamate = D-glutamate. It functions in the pathway cell wall biogenesis; peptidoglycan biosynthesis. Its function is as follows. Provides the (R)-glutamate required for cell wall biosynthesis. This Hydrogenobaculum sp. (strain Y04AAS1) protein is Glutamate racemase.